Consider the following 753-residue polypeptide: MDPTHQSFRLYAEVLVSANINKILDYGIPAELEDRVTIGSVVKVPLQRKVTNDKYKFAIVLKIKDSSDFANVIQPIAGISYEGVTLPKDLIDLIFWISQYYFCPLGSTLSLFLPTVYSQTHSTKHQNNVFLGQNAERTQEIIKSIEDPHQIAVLRKLLKTTKPLTPKELIKKTDISTKILDSLSKQGFIRIVDSANLEIQDEQLQYFLPEPPTLTQEQIEAINTISQSLITTKFQTCLLFGVTGSGKTEVYLQVIRKARSLGKSVILLVPEVALTIQTLSFFKMHFGAEVGVLHYKLSESERTQTWHKAARGLINIIIGPRSAIFCPMQNLGLIIVDEEHDGAYKQSDLPPFYQARDVAVMRGKFTNATVILGSATPSLESYTNALSKKYTLSVLSKRASTSIPTKVSLIDMNREMEKTRKKILFSPTVIRSIEQRLAVGEQTIIFFNRRGFHTNVSCSSCKYTLKCPHCDMILTFHKTERILLCHLCNTRLSKPITSCPQCHGTMTLQYRGAGTEKIEALLQDFFPTVRTIRLDSDTTRYRGSHDALIKQFATGKADILIGTQMIAKGMHFPAVTLSVVLSGDSGLYIPDFRAAEQVFQLITQVTGRSGRSYLPGEVLIQTFLPQNSTISHALAQDFPAFYKEEILGRKACNYPPFTRLIRCIFLGKCAEYTLQEAQRMHELIKQNLDAQASLMDISPCGHFKVKDLFHYQFLIKTRNILTVNKQLQDAFSAAKLSSKVRCIVDIDPITTFF.

One can recognise a Helicase ATP-binding domain in the interval 228-395 (SLITTKFQTC…LSKKYTLSVL (168 aa)). Residue 241–248 (GVTGSGKT) participates in ATP binding. Residues 337-340 (DEEH) carry the DEAH box motif. Residues C458, C461, C467, C470, C485, C488, C499, and C502 each coordinate Zn(2+). In terms of domain architecture, Helicase C-terminal spans 491–646 (RLSKPITSCP…DFPAFYKEEI (156 aa)).

It belongs to the helicase family. PriA subfamily. In terms of assembly, component of the replication restart primosome. It depends on Zn(2+) as a cofactor.

The enzyme catalyses Couples ATP hydrolysis with the unwinding of duplex DNA by translocating in the 3'-5' direction.. The catalysed reaction is ATP + H2O = ADP + phosphate + H(+). Its function is as follows. Initiates the restart of stalled replication forks, which reloads the replicative helicase on sites other than the origin of replication. Recognizes and binds to abandoned replication forks and remodels them to uncover a helicase loading site. Promotes assembly of the primosome at these replication forks. This is Replication restart protein PriA from Chlamydia muridarum (strain MoPn / Nigg).